The chain runs to 599 residues: Sulfite reductase [NADPH] flavoprotein alpha-component (599 aa).

In terms of domain architecture, Flavodoxin-like spans 64–202 (ITIISASQTG…AASEWRARVV (139 aa)). FMN contacts are provided by residues 70–75 (SQTGNA), 117–120 (STQG), and 153–162 (LGDSSYEFFC). The region spanning 234–448 (DAPLVASLSV…IEHNDNFRLP (215 aa)) is the FAD-binding FR-type domain. Residues threonine 322, alanine 356, 386–389 (RLYS), 404–406 (TVG), tyrosine 410, and 419–422 (GGAS) contribute to the FAD site. Residues 519 to 520 (SR), 525 to 529 (KVYVQ), and aspartate 561 each bind NADP(+). Residue tyrosine 599 participates in FAD binding.

The protein belongs to the NADPH-dependent sulphite reductase flavoprotein subunit CysJ family. It in the N-terminal section; belongs to the flavodoxin family. This sequence in the C-terminal section; belongs to the flavoprotein pyridine nucleotide cytochrome reductase family. In terms of assembly, alpha(8)-beta(8). The alpha component is a flavoprotein, the beta component is a hemoprotein. FAD is required as a cofactor. Requires FMN as cofactor.

The catalysed reaction is hydrogen sulfide + 3 NADP(+) + 3 H2O = sulfite + 3 NADPH + 4 H(+). Its pathway is sulfur metabolism; hydrogen sulfide biosynthesis; hydrogen sulfide from sulfite (NADPH route): step 1/1. In terms of biological role, component of the sulfite reductase complex that catalyzes the 6-electron reduction of sulfite to sulfide. This is one of several activities required for the biosynthesis of L-cysteine from sulfate. The flavoprotein component catalyzes the electron flow from NADPH -&gt; FAD -&gt; FMN to the hemoprotein component. This chain is Sulfite reductase [NADPH] flavoprotein alpha-component, found in Escherichia coli (strain K12).